A 43-amino-acid polypeptide reads, in one-letter code: Thaumatin-like protein 1 (43 aa).

It belongs to the thaumatin family.

This chain is Thaumatin-like protein 1, found in Glebionis coronaria (Crown daisy).